A 154-amino-acid polypeptide reads, in one-letter code: OCIA domain-containing protein 2 (154 aa).

Residues 1–22 (MASASARGNQDKDAHFPPPSKQ) are disordered. Residues 1-120 (MASASARGNQ…HFFEDQLRGA (120 aa)) enclose the OCIA domain. Lys41 is subject to N6-acetyllysine.

Interacts (via OCIA domain) with OCIAD1/ASRIJ and STAT3.

Its subcellular location is the endosome. It localises to the mitochondrion. The protein localises to the mitochondrion inner membrane. Its function is as follows. Has an essential role in the assembly of mitochondrial respiratory chain complex III. Is also required for STAT3 activation and plays a role in cell migration. The sequence is that of OCIA domain-containing protein 2 (OCIAD2) from Homo sapiens (Human).